The sequence spans 969 residues: MFVVGQRWISESENNLGLGIVTASDNRTVTIQFPAAEEERIYALSVAPLTRVQFQKGDRINSVEGWQLDVEEVVENQGFIIYLGKRADSGEEAVLPEMQLDHKVSFSKPQDRLFSAQIDRSDRFALRYRALQHQQAQFQSPLRGMRGIRASLIPHQLHIAKEVGQRVAPRVLLADEVGLGKTIEAGMILQQQLFSGRVERVLVLVPESLQHQWLVEMLRRFNLKFSLFDEERCSDFDKADEDGNDVSENPFDSEALVIASIDWLESSPNRAKQVLASHWDMLIVDEAHHLAWSEDEPSVGYQFVERLSKQTPAVLLLTATPEQLGQESHFARLALLDADRFYDYHSFIAEQKDYKPVADAVATLLNDKPLSHDEQNSIAELLSEKDTEPMFKVINSEKSKENDRLQVRQELIRELIDRHGTSRVLFRNTRQGVKGFPHRVYHQITLEMPSQYTNALKVMGMMGGVTKDDQLYPERLFQRMNPAAKWADFDPRIEWLITFLKNHRDEKILVICKQADTAIALEQILREREAIRSAVFHEKMSIVERDRASAYFAQMEEGAQVLISSSIGSEGRNFQFASNLVLFNLPDNPDLLEQSIGRLDRIGQKNDIQIHVPCFENSMQMVLATWYHQGLNAFEETCPMGAALFREFGEELEGFLKNPQAVGFDEFLVRTFKRQQQLKAELEQGRDRLLELNSNGGEVAQALAEAIAKEDNNPHLVNFALSLFDVIGLEQEDLGEQSIVISPTGHMLVPDFPGIAEDGTTVTFDRQLALMREDVEFLTWDHPMIRNGIDLITSGYIGKSAISLLINKNLPAGTLLLEAIYMVETQAPKGLNLTRFLPPTPVRILLDNKGNDMAAQVSFAGLEKQLKPLNKQMANKIAKMAQADIKKLIGISEQKIAAKLPELIEKASQDADSTLSAELHRLTSLQAVNKNIRSDEIEALEQQRIESLKQIALANWRLDSLRVIVSNKE.

A Helicase ATP-binding domain is found at 162 to 339 (EVGQRVAPRV…FARLALLDAD (178 aa)). An ATP-binding site is contributed by 175–182 (DEVGLGKT). A DEAH box motif is present at residues 285–288 (DEAH). The Helicase C-terminal domain maps to 492–663 (RIEWLITFLK…GFLKNPQAVG (172 aa)).

Belongs to the SNF2/RAD54 helicase family. RapA subfamily. Interacts with the RNAP. Has a higher affinity for the core RNAP than for the holoenzyme. Its ATPase activity is stimulated by binding to RNAP.

In terms of biological role, transcription regulator that activates transcription by stimulating RNA polymerase (RNAP) recycling in case of stress conditions such as supercoiled DNA or high salt concentrations. Probably acts by releasing the RNAP, when it is trapped or immobilized on tightly supercoiled DNA. Does not activate transcription on linear DNA. Probably not involved in DNA repair. The polypeptide is RNA polymerase-associated protein RapA (Actinobacillus pleuropneumoniae serotype 7 (strain AP76)).